The chain runs to 224 residues: LRP chaperone MESD (224 aa).

An N-terminal signal peptide occupies residues 1 to 29 (MAASRWLRAVLLFLCASDLLLLPPPNAYA). The segment at 1–155 (MAASRWLRAV…DRAIFMLRDG (155 aa)) is chaperone domain. 2 disordered regions span residues 28 to 49 (YAADTPGEATPPPRKKKDIRDY) and 178 to 224 (GQMY…REDL). Positions 156–195 (SYAWEIKDFLVSQDRCAEVTLEGQMYPGKGGGSKEKNKTK) are escort domain. A compositionally biased stretch (basic and acidic residues) spans 187 to 224 (GSKEKNKTKPEKAKKKEGDPKPRASKEDNRAGSRREDL). An N-linked (GlcNAc...) asparagine glycan is attached at Asn-192. A Prevents secretion from ER motif is present at residues 221–224 (REDL).

Belongs to the MESD family. As to quaternary structure, monomer. Interacts with LRP5; the interaction prevents LRP5 from forming aggregates and chaperones LRP6 to the plasma membrane. Interacts with LRP6; the interaction prevents LRP6 from forming aggregates and chaperones LRP6 to the plasma membrane. Interacts with LRP4; the interaction promotes glycosylation of LRP4 and its cell-surface expression. In terms of tissue distribution, expressed in many tissues, but not in skeletal muscles. In the retina expressed in retinal ganglion cells, inner and outer plexiform layers, photoreceptor inner and outer segments and retinal pigment epithelium (at protein level).

It is found in the endoplasmic reticulum. Functionally, chaperone specifically assisting the folding of beta-propeller/EGF modules within the family of low-density lipoprotein receptors (LDLRs). Acts as a modulator of the Wnt pathway through chaperoning the coreceptors of the canonical Wnt pathway, LRP5 and LRP6, to the plasma membrane. Essential for specification of embryonic polarity and mesoderm induction. Plays an essential role in neuromuscular junction (NMJ) formation by promoting cell-surface expression of LRP4. May regulate phagocytosis of apoptotic retinal pigment epithelium (RPE) cells. In Mus musculus (Mouse), this protein is LRP chaperone MESD.